We begin with the raw amino-acid sequence, 298 residues long: GTPase Era (298 aa).

The Era-type G domain maps to 4–171 (KSGFVSVIGR…LKEALDYIPE (168 aa)). The G1 stretch occupies residues 12–19 (GRPNVGKS). 12 to 19 (GRPNVGKS) serves as a coordination point for GTP. The interval 38 to 42 (QTTRN) is G2. The G3 stretch occupies residues 59-62 (DTPG). Residues 59-63 (DTPGI) and 121-124 (NKVD) each bind GTP. The G4 stretch occupies residues 121-124 (NKVD). Residues 150–152 (ISA) are G5. In terms of domain architecture, KH type-2 spans 202-279 (LDDEVPHGVG…FLELWVKVKP (78 aa)).

It belongs to the TRAFAC class TrmE-Era-EngA-EngB-Septin-like GTPase superfamily. Era GTPase family. Monomer.

It is found in the cytoplasm. It localises to the cell membrane. Its function is as follows. An essential GTPase that binds both GDP and GTP, with rapid nucleotide exchange. Plays a role in 16S rRNA processing and 30S ribosomal subunit biogenesis and possibly also in cell cycle regulation and energy metabolism. The sequence is that of GTPase Era from Ruminiclostridium cellulolyticum (strain ATCC 35319 / DSM 5812 / JCM 6584 / H10) (Clostridium cellulolyticum).